The sequence spans 262 residues: Glutamate 5-kinase (262 aa).

Lys-14 lines the ATP pocket. Residues Ser-54, Asp-141, and Asn-153 each contribute to the substrate site. ATP-binding positions include 173–174 (SD) and 214–220 (TGGMVTK).

This sequence belongs to the glutamate 5-kinase family.

It is found in the cytoplasm. It carries out the reaction L-glutamate + ATP = L-glutamyl 5-phosphate + ADP. The protein operates within amino-acid biosynthesis; L-proline biosynthesis; L-glutamate 5-semialdehyde from L-glutamate: step 1/2. Functionally, catalyzes the transfer of a phosphate group to glutamate to form L-glutamate 5-phosphate. In Symbiobacterium thermophilum (strain DSM 24528 / JCM 14929 / IAM 14863 / T), this protein is Glutamate 5-kinase.